The primary structure comprises 509 residues: Glutamyl-tRNA(Gln) amidotransferase subunit B, mitochondrial (509 aa).

This sequence belongs to the GatB/GatE family. GatB subfamily. As to quaternary structure, subunit of the heterotrimeric GatFAB amidotransferase (AdT) complex, composed of A, B and F subunits.

Its subcellular location is the mitochondrion. The enzyme catalyses L-glutamyl-tRNA(Gln) + L-glutamine + ATP + H2O = L-glutaminyl-tRNA(Gln) + L-glutamate + ADP + phosphate + H(+). Functionally, allows the formation of correctly charged Gln-tRNA(Gln) through the transamidation of misacylated Glu-tRNA(Gln) in the mitochondria. The reaction takes place in the presence of glutamine and ATP through an activated gamma-phospho-Glu-tRNA(Gln). The protein is Glutamyl-tRNA(Gln) amidotransferase subunit B, mitochondrial of Candida dubliniensis (strain CD36 / ATCC MYA-646 / CBS 7987 / NCPF 3949 / NRRL Y-17841) (Yeast).